The following is a 308-amino-acid chain: Aspartate carbamoyltransferase catalytic subunit (308 aa).

Carbamoyl phosphate is bound by residues Arg-50 and Thr-51. Lys-78 is a binding site for L-aspartate. Residues Arg-100, His-131, and Gln-134 each coordinate carbamoyl phosphate. 2 residues coordinate L-aspartate: Arg-164 and Arg-216. Residues Ala-259 and Pro-260 each contribute to the carbamoyl phosphate site.

The protein belongs to the aspartate/ornithine carbamoyltransferase superfamily. ATCase family. Heterododecamer (2C3:3R2) of six catalytic PyrB chains organized as two trimers (C3), and six regulatory PyrI chains organized as three dimers (R2).

It catalyses the reaction carbamoyl phosphate + L-aspartate = N-carbamoyl-L-aspartate + phosphate + H(+). It participates in pyrimidine metabolism; UMP biosynthesis via de novo pathway; (S)-dihydroorotate from bicarbonate: step 2/3. In terms of biological role, catalyzes the condensation of carbamoyl phosphate and aspartate to form carbamoyl aspartate and inorganic phosphate, the committed step in the de novo pyrimidine nucleotide biosynthesis pathway. The sequence is that of Aspartate carbamoyltransferase catalytic subunit from Oenococcus oeni (strain ATCC BAA-331 / PSU-1).